The chain runs to 274 residues: Coagulation factor IX (274 aa).

Tyr23 carries the post-translational modification Sulfotyrosine. N-linked (GlcNAc...) asparagine glycosylation occurs at Asn25. Residue Ser26 is modified to Phosphoserine. N-linked (GlcNAc...) asparagine glycosylation is present at Asn35. Thr37 carries O-linked (GalNAc...) threonine glycosylation. Asn40 is a glycosylation site (N-linked (GlcNAc...) asparagine). The Peptidase S1 domain maps to 49–274; that stretch reads VVGGEDAARG…IYTKVSRYEV (226 aa). An intrachain disulfide couples Cys74 to Cys90. His89 acts as the Charge relay system in catalysis. Ca(2+) contacts are provided by Glu103, Asn105, Glu110, and Glu113. The N-linked (GlcNAc...) asparagine glycan is linked to Asn128. The active-site Charge relay system is Asp137. Disulfide bonds link Cys204–Cys218 and Cys229–Cys257. Catalysis depends on Ser233, which acts as the Charge relay system.

It belongs to the peptidase S1 family. Heterodimer of a light chain and a heavy chain; disulfide-linked. Interacts (inactive and activated) with F11 (activated) in calcium-dependent manner. Interacts with SERPINC1. Post-translationally, activated by factor XIa, which excises the activation peptide. The propeptide can also be removed by snake venom protease. Activated by coagulation factor VIIa-tissue factor (F7-F3) complex in calcium-dependent manner.

Its subcellular location is the secreted. The enzyme catalyses Selective cleavage of Arg-|-Ile bond in factor X to form factor Xa.. In terms of biological role, factor IX is a vitamin K-dependent plasma protein that participates in the intrinsic pathway of blood coagulation by converting factor X to its active form in the presence of Ca(2+) ions, phospholipids, and factor VIIIa. In Ovis aries (Sheep), this protein is Coagulation factor IX (F9).